The primary structure comprises 734 residues: Photosystem I P700 chlorophyll a apoprotein A2 (734 aa).

Transmembrane regions (helical) follow at residues 46-69 (IFAS…FHVA), 135-158 (LYTG…LHLQ), 175-199 (LNHH…HVAI), 273-291 (MAHH…GHMY), 330-353 (IHFQ…QHMY), 369-395 (AALY…IFFI), 417-439 (AIIS…LYVH), and 517-535 (FLVH…LILV). [4Fe-4S] cluster contacts are provided by Cys-559 and Cys-568. The next 2 membrane-spanning stretches (helical) occupy residues 575–596 (AFYL…YWHW) and 643–665 (LSVW…MFLI). His-654, Met-662, and Tyr-670 together coordinate chlorophyll a. Trp-671 is a binding site for phylloquinone. A helical membrane pass occupies residues 707-727 (LVGLAHFSVGYIFTYAAFLIA).

Belongs to the PsaA/PsaB family. As to quaternary structure, the PsaA/B heterodimer binds the P700 chlorophyll special pair and subsequent electron acceptors. PSI consists of a core antenna complex that captures photons, and an electron transfer chain that converts photonic excitation into a charge separation. The eukaryotic PSI reaction center is composed of at least 11 subunits. Requires P700 is a chlorophyll a/chlorophyll a' dimer, A0 is one or more chlorophyll a, A1 is one or both phylloquinones and FX is a shared 4Fe-4S iron-sulfur center. as cofactor.

The protein localises to the plastid. The protein resides in the chloroplast thylakoid membrane. It catalyses the reaction reduced [plastocyanin] + hnu + oxidized [2Fe-2S]-[ferredoxin] = oxidized [plastocyanin] + reduced [2Fe-2S]-[ferredoxin]. PsaA and PsaB bind P700, the primary electron donor of photosystem I (PSI), as well as the electron acceptors A0, A1 and FX. PSI is a plastocyanin-ferredoxin oxidoreductase, converting photonic excitation into a charge separation, which transfers an electron from the donor P700 chlorophyll pair to the spectroscopically characterized acceptors A0, A1, FX, FA and FB in turn. Oxidized P700 is reduced on the lumenal side of the thylakoid membrane by plastocyanin. In Triticum aestivum (Wheat), this protein is Photosystem I P700 chlorophyll a apoprotein A2.